The following is a 349-amino-acid chain: DNA replication and repair protein RecF (349 aa).

An ATP-binding site is contributed by 30–37; it reads GKNGSGKT.

This sequence belongs to the RecF family.

Its subcellular location is the cytoplasm. In terms of biological role, the RecF protein is involved in DNA metabolism; it is required for DNA replication and normal SOS inducibility. RecF binds preferentially to single-stranded, linear DNA. It also seems to bind ATP. This Francisella tularensis subsp. tularensis (strain FSC 198) protein is DNA replication and repair protein RecF.